The primary structure comprises 208 residues: Ribosomal RNA small subunit methyltransferase G (208 aa).

S-adenosyl-L-methionine contacts are provided by residues Gly78, Phe83, Glu101–Ser103, Ile129–Glu130, and Arg142.

Belongs to the methyltransferase superfamily. RNA methyltransferase RsmG family.

The protein localises to the cytoplasm. Specifically methylates the N7 position of a guanine in 16S rRNA. The sequence is that of Ribosomal RNA small subunit methyltransferase G from Borreliella burgdorferi (strain ZS7) (Borrelia burgdorferi).